The chain runs to 462 residues: Golgi-associated PDZ and coiled-coil motif-containing protein (462 aa).

Positions 83-194 (KAQSVSQINH…EDEALRGHIA (112 aa)) form a coiled coil. Positions 288–371 (KVLLLKEDHE…EIEFEVVYVA (84 aa)) constitute a PDZ domain. The segment at 427–449 (TDTHENGDLGTASETPLDDGASK) is disordered.

Homooligomer. Interacts with FZD5. Interacts with FZD8. Interacts with GRID2 and BECN1. Interacts with CSPG5. Interacts with CLCN3. Interacts with STX6. Interacts with CFTR. Interacts with ASIC3. Interacts with GOLGA3. Interacts with NLGN1. Interacts with RHOQ. Interacts with MARCHF2; the interaction leads to CFTR ubiquitination and degradation. May interact with CACNG2. Interacts with CCDC62.

The protein resides in the cytoplasm. It is found in the golgi apparatus membrane. The protein localises to the golgi apparatus. It localises to the trans-Golgi network membrane. Its subcellular location is the synapse. The protein resides in the postsynaptic density. It is found in the cell projection. The protein localises to the dendrite. Its function is as follows. Plays a role in intracellular protein trafficking and degradation. May regulate CFTR chloride currents and acid-induced ASIC3 currents by modulating cell surface expression of both channels. May also regulate the intracellular trafficking of the ADR1B receptor. May play a role in autophagy. Together with MARCHF2 mediates the ubiquitination and lysosomal degradation of CFTR. Overexpression results in CFTR intracellular retention and degradation in the lysosomes. This chain is Golgi-associated PDZ and coiled-coil motif-containing protein (GOPC), found in Pongo abelii (Sumatran orangutan).